Here is a 142-residue protein sequence, read N- to C-terminus: Peptide methionine sulfoxide reductase MsrB (142 aa).

Residues 3–126 (KEELKKKLSP…NSAALRFIPF (124 aa)) form the MsrB domain. Catalysis depends on cysteine 115, which acts as the Nucleophile.

This sequence belongs to the MsrB Met sulfoxide reductase family.

It carries out the reaction L-methionyl-[protein] + [thioredoxin]-disulfide + H2O = L-methionyl-(R)-S-oxide-[protein] + [thioredoxin]-dithiol. The polypeptide is Peptide methionine sulfoxide reductase MsrB (Lactococcus lactis subsp. cremoris (strain SK11)).